The sequence spans 273 residues: Hydroxyethylthiazole kinase (273 aa).

Methionine 49 is a substrate binding site. Residues lysine 125 and threonine 171 each contribute to the ATP site. Glycine 198 lines the substrate pocket.

Belongs to the Thz kinase family. Mg(2+) serves as cofactor.

It carries out the reaction 5-(2-hydroxyethyl)-4-methylthiazole + ATP = 4-methyl-5-(2-phosphooxyethyl)-thiazole + ADP + H(+). It functions in the pathway cofactor biosynthesis; thiamine diphosphate biosynthesis; 4-methyl-5-(2-phosphoethyl)-thiazole from 5-(2-hydroxyethyl)-4-methylthiazole: step 1/1. In terms of biological role, catalyzes the phosphorylation of the hydroxyl group of 4-methyl-5-beta-hydroxyethylthiazole (THZ). This Natranaerobius thermophilus (strain ATCC BAA-1301 / DSM 18059 / JW/NM-WN-LF) protein is Hydroxyethylthiazole kinase.